The chain runs to 620 residues: Bicaudal D-related protein homolog (620 aa).

Positions 23-41 (NNNNNSIVGGSSSSSSGGN) are enriched in low complexity. Residues 23 to 53 (NNNNNSIVGGSSSSSSGGNKSKRPRQFGQYS) are disordered. Coiled-coil stretches lie at residues 120–331 (AAEL…LSER) and 461–575 (VLEQ…LIDE). 2 stretches are compositionally biased toward basic and acidic residues: residues 493–503 (KEERDQARGDL) and 509–528 (RDELLSKAQTERDAANDRRT). The interval 493-528 (KEERDQARGDLEDNTDRDELLSKAQTERDAANDRRT) is disordered.

It belongs to the BICDR family. In terms of assembly, may homodimerize but does not interact with BicD. May interact with eEF1gamma; The interaction is probably indirect.

Functions redundantly with BicD. Involved in formation and/or development of mechanosensory organs during metamorphosis. During macrochaetae development, together with BicD, involved in Rab 6 and Spn-F stability and distribution and actin cytoskeleton organization. This Drosophila melanogaster (Fruit fly) protein is Bicaudal D-related protein homolog.